We begin with the raw amino-acid sequence, 451 residues long: Probable gamma-glutamyl phosphate reductase (451 aa).

The protein belongs to the gamma-glutamyl phosphate reductase family.

The enzyme catalyses L-glutamate 5-semialdehyde + phosphate + NADP(+) = L-glutamyl 5-phosphate + NADPH + H(+). It participates in amino-acid biosynthesis; L-proline biosynthesis; L-glutamate 5-semialdehyde from L-glutamate: step 2/2. Its function is as follows. Catalyzes the NADPH dependent reduction of L-gamma-glutamyl 5-phosphate into L-glutamate 5-semialdehyde and phosphate. The product spontaneously undergoes cyclization to form 1-pyrroline-5-carboxylate. The chain is Probable gamma-glutamyl phosphate reductase (pro1) from Schizosaccharomyces pombe (strain 972 / ATCC 24843) (Fission yeast).